A 190-amino-acid chain; its full sequence is Potassium-transporting ATPase KdpC subunit (190 aa).

A helical membrane pass occupies residues 10-30 (TFIFLLLITGGVYPLLTTVLG).

It belongs to the KdpC family. In terms of assembly, the system is composed of three essential subunits: KdpA, KdpB and KdpC.

The protein localises to the cell inner membrane. Part of the high-affinity ATP-driven potassium transport (or Kdp) system, which catalyzes the hydrolysis of ATP coupled with the electrogenic transport of potassium into the cytoplasm. This subunit acts as a catalytic chaperone that increases the ATP-binding affinity of the ATP-hydrolyzing subunit KdpB by the formation of a transient KdpB/KdpC/ATP ternary complex. The sequence is that of Potassium-transporting ATPase KdpC subunit from Escherichia coli (strain 55989 / EAEC).